The sequence spans 597 residues: Lipoprotein LpqB (597 aa).

An N-terminal signal peptide occupies residues 1-28 (MTPGRRSALLSRSVCGAIVLAVLVTVSG). Cysteine 29 is lipidated: N-palmitoyl cysteine. A lipid anchor (S-diacylglycerol cysteine) is attached at cysteine 29. A compositionally biased stretch (polar residues) spans 38-51 (PQAIGTINRDSPGS). The segment at 38 to 58 (PQAIGTINRDSPGSSVAAPAP) is disordered.

This sequence belongs to the LpqB lipoprotein family.

The protein resides in the cell membrane. This chain is Lipoprotein LpqB, found in Rhodococcus jostii (strain RHA1).